The sequence spans 399 residues: MNDKHKNFGFSTRAIHYGYNALENNGALIPPVYMTSTFAFPTVEYGAGCFAGEESGHFYTRISNPTLALLESRMAALENGEAGVAFSSGMGAIAATFWTLLRPGDEIIVNRTLYGCTFALLHHGIGEFGVVVKHVDMSNLAELEAAIGPATRMIYFETPANPNMQLVDIAAVSAIAHTHNDLIVVIDNTYCTPYLQRPLELGADVVVHSATKYLSGHSDITAGVVVTRQSLADRIRLQGLKDLTGAVLSPHDAHLLMRGIKTLALRMDRHCSSAQVIAQMLQDHPAVEWVAYPGLPSFPQYALASRQMKLPGGMIAFELKGGMAAGQRFMNALQLFSRAVSLGGAESLAQHPASMTHSTYTLEERAKHGISEGLVRLAVGLEDIADLLADIEQAMKAMA.

Residues 59-61 (YTR) and 89-90 (GM) contribute to the pyridoxal 5'-phosphate site. Tyrosine 114 contributes to the substrate binding site. 209-211 (SAT) serves as a coordination point for pyridoxal 5'-phosphate. Lysine 212 is modified (N6-(pyridoxal phosphate)lysine). Arginine 376 contributes to the substrate binding site.

Belongs to the trans-sulfuration enzymes family. L-methionine gamma-lyase subfamily. Homotetramer; dimer of active dimers. Pyridoxal 5'-phosphate serves as cofactor.

The catalysed reaction is L-methionine + H2O = methanethiol + 2-oxobutanoate + NH4(+). Functionally, catalyzes the alpha,gamma-elimination of L-methionine to produce methanethiol, 2-oxobutanoate and ammonia. This Pseudomonas deceptionensis protein is L-methionine gamma-lyase.